The following is a 63-amino-acid chain: Large ribosomal subunit protein uL30 (63 aa).

The protein belongs to the universal ribosomal protein uL30 family. As to quaternary structure, part of the 50S ribosomal subunit.

The sequence is that of Large ribosomal subunit protein uL30 from Methylobacterium sp. (strain 4-46).